The chain runs to 236 residues: Aquaporin Z (236 aa).

2 consecutive transmembrane segments (helical) span residues 12–32 (FFGTFWLVLGGCGSAVLAAGV) and 37–57 (IGYAGVALAFGLTVLTMAYAV). Residues 66-68 (NPA) carry the NPA 1 motif. Helical transmembrane passes span 92–112 (VVGAIVAAATLASIAQGVAGF), 136–156 (AALICEIVLSAGFVFVILGAT), and 163–183 (GFAPIPIGLALTLIHLISIPV). The NPA 2 motif lies at 189–191 (NPA). The helical transmembrane segment at 197–217 (ALFVGGWALEQLWLFWLAPIA) threads the bilayer.

Belongs to the MIP/aquaporin (TC 1.A.8) family. As to quaternary structure, homotetramer.

The protein localises to the cell inner membrane. It catalyses the reaction H2O(in) = H2O(out). Functionally, channel that permits osmotically driven movement of water in both directions. It is involved in the osmoregulation and in the maintenance of cell turgor during volume expansion in rapidly growing cells. It mediates rapid entry or exit of water in response to abrupt changes in osmolarity. The protein is Aquaporin Z of Bordetella bronchiseptica (strain ATCC BAA-588 / NCTC 13252 / RB50) (Alcaligenes bronchisepticus).